The sequence spans 108 residues: Protein ORFa in retron Ec67 (108 aa).

The polypeptide is Protein ORFa in retron Ec67 (Escherichia coli).